Reading from the N-terminus, the 185-residue chain is Potassium-transporting ATPase KdpC subunit (185 aa).

The helical transmembrane segment at 11-31 (LALLMTLVTGALYPLAVTGIA) threads the bilayer.

It belongs to the KdpC family. In terms of assembly, the system is composed of three essential subunits: KdpA, KdpB and KdpC.

The protein localises to the cell inner membrane. Part of the high-affinity ATP-driven potassium transport (or Kdp) system, which catalyzes the hydrolysis of ATP coupled with the electrogenic transport of potassium into the cytoplasm. This subunit acts as a catalytic chaperone that increases the ATP-binding affinity of the ATP-hydrolyzing subunit KdpB by the formation of a transient KdpB/KdpC/ATP ternary complex. The chain is Potassium-transporting ATPase KdpC subunit from Pseudomonas putida (strain ATCC 47054 / DSM 6125 / CFBP 8728 / NCIMB 11950 / KT2440).